We begin with the raw amino-acid sequence, 340 residues long: Zinc finger protein 488 (340 aa).

The important for transcriptional repression activity stretch occupies residues 72–187 (AELALLVAPG…SVFPAGESAD (116 aa)). Residues 77 to 180 (LVAPGKPRPG…AERPELTSVF (104 aa)) are disordered. A compositionally biased stretch (pro residues) spans 82–91 (KPRPGKPLPP). Over residues 106 to 125 (PRMKDRQVDAQAQEREHDDP) the composition is skewed to basic and acidic residues. 2 consecutive C2H2-type zinc fingers follow at residues 275–302 (NWCA…KKEH) and 317–339 (LACP…MTSH). The short motif at 298–305 (HKKEHAGP) is the Nuclear localization signal element.

The protein belongs to the krueppel C2H2-type zinc-finger protein family. In terms of assembly, interacts with OLIG2.

The protein localises to the nucleus. Transcriptional repressor. Plays a role in oligodendrocyte differentiation, together with OLIG2. Mediates Notch signaling-activated formation of oligodendrocyte precursors. Promotes differentiation of adult neural stem progenitor cells (NSPCs) into mature oligodendrocytes and contributes to remyelination following nerve injury. The chain is Zinc finger protein 488 (ZNF488) from Homo sapiens (Human).